Consider the following 306-residue polypeptide: Agmatinase (306 aa).

6 residues coordinate Mn(2+): histidine 128, aspartate 151, histidine 153, aspartate 155, aspartate 232, and aspartate 234.

The protein belongs to the arginase family. Agmatinase subfamily. Mn(2+) serves as cofactor.

It catalyses the reaction agmatine + H2O = urea + putrescine. The protein operates within amine and polyamine biosynthesis; putrescine biosynthesis via agmatine pathway; putrescine from agmatine: step 1/1. Functionally, catalyzes the formation of putrescine from agmatine. The protein is Agmatinase (speB) of Proteus mirabilis.